The following is a 129-amino-acid chain: Lysozyme C (129 aa).

In terms of domain architecture, C-type lysozyme spans 1-129 (KVFGRCELAA…VHAWIRGCRL (129 aa)). 4 cysteine pairs are disulfide-bonded: C6–C127, C30–C115, C64–C80, and C76–C94. Catalysis depends on residues E35 and D52.

Belongs to the glycosyl hydrolase 22 family. Monomer.

Its subcellular location is the secreted. The enzyme catalyses Hydrolysis of (1-&gt;4)-beta-linkages between N-acetylmuramic acid and N-acetyl-D-glucosamine residues in a peptidoglycan and between N-acetyl-D-glucosamine residues in chitodextrins.. Its function is as follows. Lysozymes have primarily a bacteriolytic function; those in tissues and body fluids are associated with the monocyte-macrophage system and enhance the activity of immunoagents. This is Lysozyme C (LYZ) from Callipepla californica (California quail).